The sequence spans 393 residues: MIETDVLVIGGGPAGSSAAKHAALGGAKVILLDKRSEIGAPKRCAEGVSKKGLAKLGIEPSPRWITKEIDGVRLTSPDGTDVWLTEEEIELPEAGYILERKVFDKHMAMDAARAGAEIRIKTLATGMDKIEDGFIVSTESMGKTEEIKAKIVIAADGPEGHVARWAGLKGSAKAKEMESGVQYEMVNVEFDREAVIEFYFGSCAPGGYVWIFPKGDDIANVGLAILQHKATKPAIEYLDDFIAKCPATKNAQAVELNVGGDPVGGMPKKMYDDNILVCGDAAGQVNPLTGGGIISGMTGGMYAGQVAAEAIKEGDHSKKFLKKYDKITRDDLSHEIDKYKKVQEYMLTLSDEELDNIAHAFQDVNFEKISTTELVKALVKVSPKALLKLGKFI.

FAD contacts are provided by A14, D33, C44, A45, G47, R100, A124, D280, G292, and I293.

The protein belongs to the geranylgeranyl reductase family. DGGGPL reductase subfamily. Requires FAD as cofactor.

The catalysed reaction is a 2,3-bis-O-phytanyl-sn-glycerol 1-phospholipid + 8 A = a 2,3-bis-O-(geranylgeranyl)-sn-glycerol 1-phospholipid + 8 AH2. It catalyses the reaction 2,3-bis-O-(phytanyl)-sn-glycerol 1-phosphate + 8 A = 2,3-bis-O-(geranylgeranyl)-sn-glycerol 1-phosphate + 8 AH2. It carries out the reaction CDP-2,3-bis-O-(geranylgeranyl)-sn-glycerol + 8 AH2 = CDP-2,3-bis-O-(phytanyl)-sn-glycerol + 8 A. The enzyme catalyses archaetidylserine + 8 AH2 = 2,3-bis-O-phytanyl-sn-glycero-3-phospho-L-serine + 8 A. It functions in the pathway membrane lipid metabolism; glycerophospholipid metabolism. Functionally, is involved in the reduction of 2,3-digeranylgeranylglycerophospholipids (unsaturated archaeols) into 2,3-diphytanylglycerophospholipids (saturated archaeols) in the biosynthesis of archaeal membrane lipids. Catalyzes the formation of archaetidic acid (2,3-di-O-phytanyl-sn-glyceryl phosphate) from 2,3-di-O-geranylgeranylglyceryl phosphate (DGGGP) via the hydrogenation of each double bond of the isoprenoid chains. Is also probably able to reduce double bonds of geranyl groups in CDP-2,3-bis-O-(geranylgeranyl)-sn-glycerol and archaetidylserine, thus acting at various stages in the biosynthesis of archaeal membrane lipids. This is Digeranylgeranylglycerophospholipid reductase from Methanobrevibacter smithii (strain ATCC 35061 / DSM 861 / OCM 144 / PS).